Reading from the N-terminus, the 207-residue chain is Protein dct-5 (207 aa).

Residues 13–33 (LNFILSIMNSYLFVLIVSIGF) traverse the membrane as a helical segment.

The protein localises to the membrane. In terms of biological role, acts downstream of daf-16/foxo to suppress tumors induced by disruption of gld-1. Potentially a direct target of daf-15/foxo. This Caenorhabditis elegans protein is Protein dct-5 (dct-5).